Reading from the N-terminus, the 212-residue chain is MAVGILGTKLGMTQIFDQETGMAIPVTVVQAGPCTVTQVKTPDTDGYTAIQVGYHEVKEKALTKAEIGHLKKIDAPPLRHLKEYRLDDSSQYQLGDAIKADIFNPGDLVDVSGKSMGRGFAGYQKRHNFKRGNMTHGSKNHRLPGSTGAGTTPGRVYPGKRMAGQYGATQVTIRHLTVVRVDSDRNLILVKGAIPGKPGTLLNITPAKTVGK.

Residues 130-155 (KRGNMTHGSKNHRLPGSTGAGTTPGR) form a disordered region.

This sequence belongs to the universal ribosomal protein uL3 family. As to quaternary structure, part of the 50S ribosomal subunit. Forms a cluster with proteins L14 and L19.

Its function is as follows. One of the primary rRNA binding proteins, it binds directly near the 3'-end of the 23S rRNA, where it nucleates assembly of the 50S subunit. This is Large ribosomal subunit protein uL3 from Rippkaea orientalis (strain PCC 8801 / RF-1) (Cyanothece sp. (strain PCC 8801)).